Reading from the N-terminus, the 397-residue chain is Probable peptidoglycan glycosyltransferase FtsW (397 aa).

The Cytoplasmic portion of the chain corresponds to 1–18 (MSALTLTASKNTQTMTLD). A helical membrane pass occupies residues 19-39 (LPLLGSALALAAIGLIMVTSA). At 40 to 58 (SVDFADDANGQALYYMWRH) the chain is on the periplasmic side. The chain crosses the membrane as a helical span at residues 59 to 79 (LTYLLAGVAVGFVILRLPLEW). Residues 80-83 (WHKQ) are Cytoplasmic-facing. Residues 84–104 (SWLLLVVALGFLVAVLIPGIG) form a helical membrane-spanning segment. Topologically, residues 105-112 (RTVNGSTR) are periplasmic. Residues 113–133 (WISLGVINIQASEIAKVCLAI) form a helical membrane-spanning segment. At 134 to 148 (YTASYLVRRLDEVRG) the chain is on the cytoplasmic side. Residues 149 to 169 (SWWGFAKPLLVLMLVALLLLM) traverse the membrane as a helical segment. Topologically, residues 170–172 (EPD) are periplasmic. The helical transmembrane segment at 173 to 193 (FGALVVTMCAVVGMIFLSGVA) threads the bilayer. Topologically, residues 194–196 (LSR) are cytoplasmic. The chain crosses the membrane as a helical span at residues 197-217 (FAALLMFCVGSVALLAVSQPY). Residues 218-272 (RLKRLTAYTDPWADQFDSGYQLTQALIAFGRGEWSGVGLGNSVQKLFYLPEAHTD) are Periplasmic-facing. The helical transmembrane segment at 273–293 (FVFAIIAEELGLLGSLLIIVL) threads the bilayer. At 294 to 316 (FGVLLWRGMYVSRVAERAGQLFN) the chain is on the cytoplasmic side. Residues 317-337 (AYAGYGVTLLLGGQALINLGV) traverse the membrane as a helical segment. Topologically, residues 338–348 (NTGLLPTKGLT) are periplasmic. The helical transmembrane segment at 349 to 369 (LPLISYGGSSLIISCLCVAIL) threads the bilayer. Topologically, residues 370 to 397 (LRIGSEAVSGEQTEDESPKVKNRGGAQR) are cytoplasmic.

It belongs to the SEDS family. FtsW subfamily.

Its subcellular location is the cell inner membrane. The catalysed reaction is [GlcNAc-(1-&gt;4)-Mur2Ac(oyl-L-Ala-gamma-D-Glu-L-Lys-D-Ala-D-Ala)](n)-di-trans,octa-cis-undecaprenyl diphosphate + beta-D-GlcNAc-(1-&gt;4)-Mur2Ac(oyl-L-Ala-gamma-D-Glu-L-Lys-D-Ala-D-Ala)-di-trans,octa-cis-undecaprenyl diphosphate = [GlcNAc-(1-&gt;4)-Mur2Ac(oyl-L-Ala-gamma-D-Glu-L-Lys-D-Ala-D-Ala)](n+1)-di-trans,octa-cis-undecaprenyl diphosphate + di-trans,octa-cis-undecaprenyl diphosphate + H(+). It functions in the pathway cell wall biogenesis; peptidoglycan biosynthesis. Its function is as follows. Peptidoglycan polymerase that is essential for cell division. In Hahella chejuensis (strain KCTC 2396), this protein is Probable peptidoglycan glycosyltransferase FtsW.